The primary structure comprises 282 residues: Nudix hydrolase 7 (282 aa).

The Nudix hydrolase domain occupies 101 to 233 (SHVVGAGALV…KNEMFKFMAN (133 aa)). The Nudix box motif lies at 139–160 (GVINEGEDIWTGVAREVEEETG). Positions 154 and 158 each coordinate Mg(2+).

The protein belongs to the Nudix hydrolase family. In terms of assembly, homodimer. Interacts with RACK1A, GG1 and GG2. The cofactor is Mg(2+). In terms of tissue distribution, expressed in stems, leaves, roots, flowers and siliques.

The protein localises to the nucleus. It is found in the cytoplasm. Its subcellular location is the cell membrane. The enzyme catalyses ADP-D-ribose + H2O = D-ribose 5-phosphate + AMP + 2 H(+). The catalysed reaction is NAD(+) + H2O = beta-nicotinamide D-ribonucleotide + AMP + 2 H(+). It catalyses the reaction NADH + H2O = reduced beta-nicotinamide D-ribonucleotide + AMP + 2 H(+). Not inhibited by fluoride. Mediates the hydrolysis of some nucleoside diphosphate derivatives. Can use both NADH and ADP-ribose as substrates, but not 8-oxo-dGTP, cyclic ADP-ribose, GDP-mannose, UDP-glucose, ATP, or GTP. Exerts negative control of EDS1 signaling. The protein is Nudix hydrolase 7 (NUDT7) of Arabidopsis thaliana (Mouse-ear cress).